The following is a 466-amino-acid chain: Argininosuccinate lyase (466 aa).

Belongs to the lyase 1 family. Argininosuccinate lyase subfamily.

The protein localises to the cytoplasm. It carries out the reaction 2-(N(omega)-L-arginino)succinate = fumarate + L-arginine. Its pathway is amino-acid biosynthesis; L-arginine biosynthesis; L-arginine from L-ornithine and carbamoyl phosphate: step 3/3. In Roseobacter denitrificans (strain ATCC 33942 / OCh 114) (Erythrobacter sp. (strain OCh 114)), this protein is Argininosuccinate lyase.